A 556-amino-acid polypeptide reads, in one-letter code: RING finger protein 207 (556 aa).

The RING-type zinc finger occupies 25–64; it reads CPLCHAQYERPCLLDCFHEFCAGCLRGRAADGRLACPLCQ. The B box-type; atypical zinc-finger motif lies at 93–145; it reads TEVVRCANCDLECGKQDAETTYFCNTCGQPLCARCRDETHRARMFARHDIVAL. Positions 98, 101, 127, and 132 each coordinate Zn(2+). Coiled-coil stretches lie at residues 218–273 and 385–425; these read TREA…NKAE and FTEH…SLIK. The segment at 517–556 is disordered; that stretch reads FQVPVDEPSDHPQNTHDDGVNAEAPARVSTLKPAMEKEVS. Over residues 524–535 the composition is skewed to basic and acidic residues; the sequence is PSDHPQNTHDDG.

Interacts with the core-glycosylated, but not the fully glycosylated form of KCNH2/HERG. Interacts with DNAJA1 and HSPA8. Interacts (via the C-terminus) with HSPA1A; this interaction additively increases KCNH2 expression.

It localises to the cytoplasm. Plays a role in cardiac repolarization possibly by stabilizing membrane expression of the potassium channel KCNH2/HERG, or by assisting its synthesis, folding or export from the endoplasmic reticulum, in a heat shock protein-dependent manner. This chain is RING finger protein 207 (RNF207), found in Bos taurus (Bovine).